Reading from the N-terminus, the 373-residue chain is Indole glucosinolate O-methyltransferase 4 (373 aa).

S-adenosyl-L-homocysteine contacts are provided by Gly-217, Asp-240, Asp-260, Met-261, and Lys-274. The active-site Proton acceptor is His-278.

The protein belongs to the class I-like SAM-binding methyltransferase superfamily. Cation-independent O-methyltransferase family. Interacts with B'GAMMA.

Its pathway is secondary metabolite biosynthesis. Involved in indole glucosinolate biosynthesis. Catalyzes methoxylation reactions of the glucosinolate indole ring. Converts the hydroxy intermediates 4-hydroxy-indol-3-yl-methylglucosinolate (4OH-I3M) and 1-hydroxy-indol-3-yl-methylglucosinolate (1OH-I3M) to 4-methoxy-indol-3-yl-methylglucosinolate (4MO-I3M) and 1-methoxy-indol-3-yl-methylglucosinolate(1MO-I3M), respectively. The polypeptide is Indole glucosinolate O-methyltransferase 4 (Arabidopsis thaliana (Mouse-ear cress)).